Reading from the N-terminus, the 343-residue chain is Holliday junction branch migration complex subunit RuvB (343 aa).

Residues 4-193 (TDNLTAAQPQ…FGIVSRLEFY (190 aa)) form a large ATPase domain (RuvB-L) region. ATP contacts are provided by residues L32, R33, G74, K77, T78, T79, 140 to 142 (EDY), R183, Y193, and R230. Position 78 (T78) interacts with Mg(2+). The segment at 194-264 (ENRDLATIVS…IADAALSMLD (71 aa)) is small ATPAse domain (RuvB-S). Residues 267–343 (VQGLDVMDRK…YLHFGLPVEK (77 aa)) are head domain (RuvB-H). Residues R322 and R327 each contribute to the DNA site.

It belongs to the RuvB family. Homohexamer. Forms an RuvA(8)-RuvB(12)-Holliday junction (HJ) complex. HJ DNA is sandwiched between 2 RuvA tetramers; dsDNA enters through RuvA and exits via RuvB. An RuvB hexamer assembles on each DNA strand where it exits the tetramer. Each RuvB hexamer is contacted by two RuvA subunits (via domain III) on 2 adjacent RuvB subunits; this complex drives branch migration. In the full resolvosome a probable DNA-RuvA(4)-RuvB(12)-RuvC(2) complex forms which resolves the HJ.

The protein localises to the cytoplasm. The catalysed reaction is ATP + H2O = ADP + phosphate + H(+). Functionally, the RuvA-RuvB-RuvC complex processes Holliday junction (HJ) DNA during genetic recombination and DNA repair, while the RuvA-RuvB complex plays an important role in the rescue of blocked DNA replication forks via replication fork reversal (RFR). RuvA specifically binds to HJ cruciform DNA, conferring on it an open structure. The RuvB hexamer acts as an ATP-dependent pump, pulling dsDNA into and through the RuvAB complex. RuvB forms 2 homohexamers on either side of HJ DNA bound by 1 or 2 RuvA tetramers; 4 subunits per hexamer contact DNA at a time. Coordinated motions by a converter formed by DNA-disengaged RuvB subunits stimulates ATP hydrolysis and nucleotide exchange. Immobilization of the converter enables RuvB to convert the ATP-contained energy into a lever motion, pulling 2 nucleotides of DNA out of the RuvA tetramer per ATP hydrolyzed, thus driving DNA branch migration. The RuvB motors rotate together with the DNA substrate, which together with the progressing nucleotide cycle form the mechanistic basis for DNA recombination by continuous HJ branch migration. Branch migration allows RuvC to scan DNA until it finds its consensus sequence, where it cleaves and resolves cruciform DNA. The polypeptide is Holliday junction branch migration complex subunit RuvB (Neisseria meningitidis serogroup A / serotype 4A (strain DSM 15465 / Z2491)).